The sequence spans 437 residues: Succinyl-CoA:cyclohexane-1-carboxylate CoA transferase (437 aa).

Position 221 to 225 (221 to 225 (GWGGI)) interacts with CoA. Catalysis depends on E244, which acts as the 5-glutamyl coenzyme A thioester intermediate. 3 residues coordinate CoA: L319, G342, and K367.

Belongs to the acetyl-CoA hydrolase/transferase family. As to quaternary structure, homodimer.

It carries out the reaction cyclohexane-1-carboxylate + succinyl-CoA = cyclohexane-1-carbonyl-CoA + succinate. It catalyses the reaction cyclohexane-1-carboxylate + butanoyl-CoA = cyclohexane-1-carbonyl-CoA + butanoate. Functionally, acyl-CoA transferase involved in the anaerobic degradation of cyclohexane carboxylic acid (CHC). Catalyzes the activation of CHC to cyclohexane-1-carbonyl-CoA (CHCoA). Benzoic acid and cyclohex-1-ene-1-carboxylic acid can also be used as substrates, but with lower specific activity. Shows highest activity with succinyl-CoA and butanoyl-coA as a CoA donor, and lower activity with crotonyl-CoA, acetyl-CoA, glutaryl-CoA, CH1eneCoA, propionyl-CoA and acetoacetyl-CoA. In vitro, the enzyme can use butanoyl-coA as a CoA donor with greater efficiency than succinyl-CoA. However, succinyl-CoA is the most abundant CoA ester in exponentially grown cells, whereas butanoyl-coA is hardly detectable, indicating that succinyl-CoA is the natural CoA donor for CHC activation. The protein is Succinyl-CoA:cyclohexane-1-carboxylate CoA transferase of Geobacter metallireducens (strain ATCC 53774 / DSM 7210 / GS-15).